A 107-amino-acid polypeptide reads, in one-letter code: Replication protein A 14 kDa subunit A (107 aa).

Position 1 is an N-acetylmethionine (Met1).

It belongs to the replication factor A protein 3 family. As to quaternary structure, component of the heterotrimeric canonical replication protein A complex (RPA).

The protein localises to the nucleus. Functionally, as part of the replication protein A (RPA/RP-A), a single-stranded DNA-binding heterotrimeric complex, may play an essential role in DNA replication, recombination and repair. Binds and stabilizes single-stranded DNA intermediates, preventing complementary DNA reannealing and recruiting different proteins involved in DNA metabolism. In Arabidopsis thaliana (Mouse-ear cress), this protein is Replication protein A 14 kDa subunit A (RPA3A).